The sequence spans 36 residues: MEIKVQRLSLWMINTVFLLSPINNHQTNTINLIFEM.

This is Protein YmgL from Escherichia coli (strain K12).